The sequence spans 221 residues: Esterase C25G4.2 (221 aa).

Catalysis depends on charge relay system residues Ser106, Asp166, and His194.

It belongs to the LovG family.

The sequence is that of Esterase C25G4.2 from Caenorhabditis elegans.